The primary structure comprises 225 residues: uncharacterized protein (225 aa).

Transmembrane regions (helical) follow at residues 25–45, 57–77, 83–103, 109–129, 135–155, and 187–207; these read MMLA…IPFL, VFLI…ITVA, FIWD…NFAI, LYFH…SLAT, LLTT…FGYV, and IFAL…LIGV.

The protein resides in the cell membrane. This is an uncharacterized protein from Mycoplasma pneumoniae (strain ATCC 29342 / M129 / Subtype 1) (Mycoplasmoides pneumoniae).